Here is a 465-residue protein sequence, read N- to C-terminus: Cysteine--tRNA ligase (465 aa).

C27 lines the Zn(2+) pocket. The short motif at 29–39 is the 'HIGH' region element; that stretch reads PTVYNFFHIGN. C207, H232, and E236 together coordinate Zn(2+). The 'KMSKS' region signature appears at 264–268; sequence KMSKS. K267 is an ATP binding site.

Belongs to the class-I aminoacyl-tRNA synthetase family. In terms of assembly, monomer. It depends on Zn(2+) as a cofactor.

It is found in the cytoplasm. The enzyme catalyses tRNA(Cys) + L-cysteine + ATP = L-cysteinyl-tRNA(Cys) + AMP + diphosphate. The sequence is that of Cysteine--tRNA ligase from Clostridium botulinum (strain ATCC 19397 / Type A).